A 101-amino-acid polypeptide reads, in one-letter code: Large ribosomal subunit protein bL28 (101 aa).

It belongs to the bacterial ribosomal protein bL28 family.

In Rhodopseudomonas palustris (strain BisA53), this protein is Large ribosomal subunit protein bL28.